Here is a 653-residue protein sequence, read N- to C-terminus: uncharacterized protein (653 aa).

Helical transmembrane passes span Ala-39–Ile-59 and Ala-207–Ile-227. The 53-residue stretch at Phe-225–Gln-277 folds into the HAMP domain. Residues Glu-286–Asn-356 enclose the PAS domain. One can recognise a Histidine kinase domain in the interval Asn-421–Lys-651. Phosphohistidine; by autocatalysis is present on His-424.

Its subcellular location is the plastid. It localises to the chloroplast membrane. It carries out the reaction ATP + protein L-histidine = ADP + protein N-phospho-L-histidine.. This is an uncharacterized protein from Pyropia yezoensis (Susabi-nori).